The primary structure comprises 889 residues: Terminal uridylyltransferase 3 (889 aa).

Residues 123-151 form a C2H2-type; atypical zinc finger; the sequence is VRCDLCAKMIESRDEEQIQEHFQVHHAAL. The Zn(2+) site is built by C125, C128, H143, and H148. Residues S225 and 236–239 each bind UTP; that span reads SDAD. Residues D237 and D239 each contribute to the Mg(2+) site. R286 contacts RNA. UTP-binding positions include 394 to 398, K419, K423, and 437 to 438; these read GVRNS and SY. Residues 505–572 form the PAP-associated domain; sequence LGGLIPLFFL…LCIDDPYEDN (68 aa). Residues 565-574 carry the Nucleotide recognition motif (NRM) motif; it reads IDDPYEDNFN. Disordered stretches follow at residues 675–702 and 829–849; these read NNKSKEGDDDAEGVTNNQEGEPPDHVES and RKKSKGSKKRKNAVRRGNHAG. Positions 829–846 are enriched in basic residues; the sequence is RKKSKGSKKRKNAVRRGN.

It belongs to the DNA polymerase type-B-like family. Requires Mg(2+) as cofactor. Mn(2+) serves as cofactor.

It localises to the cytoplasm. It carries out the reaction RNA(n) + UTP = RNA(n)-3'-uridine ribonucleotide + diphosphate. Functionally, terminal uridylyltransferase which catalyzes the addition of Us to the 3'-hydroxyl group of single-stranded RNAs. Does not mediate RNA-independent UTP polymerization. The sequence is that of Terminal uridylyltransferase 3 from Trypanosoma brucei brucei.